Reading from the N-terminus, the 528-residue chain is Importin subunit alpha-7 (528 aa).

The IBB domain maps to 1–56; that stretch reads MKGGETMSVRRSGYKAVVDGVGGRRRREDDMVEIRKAKREESLLKKRREALPHSPS. 8 ARM repeats span residues 93–133, 136–175, 178–218, 220–259, 262–301, 304–344, 347–386, and 390–429; these read NVRV…NIAS, SENTEVVIDHGAVAILVRLLNSPYDVVREQVVWALGNISG, PRCR…NLCR, KPQPPFDQVSAALPALAQLIRLDDKELLAYTCWALVYLSD, NEKIQAVIEANVCARLIGLSIHRSPSVITPALRTIGNIVT, DSQT…NITA, QSQIQAVFDADICPALVNLLQNSEGDVKKEAAWAICNAIA, and YKQIMFLVKQECIKPLCDLLTCSDTQLVMVCLEALKKILK.

The protein belongs to the importin alpha family. Forms a complex with importin subunit beta-1.

It is found in the nucleus envelope. Its function is as follows. Binds to conventional NLS motifs and mediates nuclear protein import across the nuclear envelope. Acts as a cellular receptor for the nuclear import of the virD2 protein of Agrobacterium, but is not essential for Agrobacterium-mediated root transformation. In Arabidopsis thaliana (Mouse-ear cress), this protein is Importin subunit alpha-7.